Reading from the N-terminus, the 1749-residue chain is Kinase non-catalytic C-lobe domain-containing protein 1 (1749 aa).

The KIND 1 domain maps to 37–217 (VSLADILSLR…QDVSESSWRE (181 aa)). Disordered stretches follow at residues 210-275 (VSES…SHSR) and 361-435 (CRLW…ARQL). 2 stretches are compositionally biased toward basic and acidic residues: residues 363 to 373 (LWPEQEPEHQL) and 410 to 430 (ADPR…RIPE). The 165-residue stretch at 444 to 608 (VSLQDLLSQL…RASICQVYQE (165 aa)) folds into the KIND 2 domain. Disordered stretches follow at residues 689-871 (ARDQ…RPAD) and 962-1061 (QASP…GGAS). Positions 702–717 (ERGGQREGEGEEKLSL) are enriched in basic and acidic residues. 2 stretches are compositionally biased toward low complexity: residues 739–748 (QGAAPEPLGA) and 766–779 (PANQ…AAPG). Residues 823–833 (HGPRHPPKPPR) show a composition bias toward basic residues. The segment covering 853-871 (GERDDQSPDSVPERPRPAD) has biased composition (basic and acidic residues). S964 is modified (phosphoserine). Residues 980–990 (SQSPRSPSSKR) are compositionally biased toward low complexity. The segment covering 1005 to 1019 (RTSSRAPCSPTSVSD) has biased composition (polar residues). The span at 1040–1056 (VKAERAQQPEAGEDRRP) shows a compositional bias: basic and acidic residues. Positions 1133 to 1190 (QQLMMEKRNYRKTLKFYQKLLQKEKRNKGSDVKTMLSKLKGQLEEMKSRVQFLSLVKK) form a coiled coil. One can recognise an N-terminal Ras-GEF domain in the interval 1246 to 1371 (KARILQAGTP…HLLGLLEVGM (126 aa)). The 252-residue stretch at 1468 to 1719 (STHQLFSQLT…SGADISTLAA (252 aa)) folds into the Ras-GEF domain.

In terms of assembly, interacts (via KIND2) with MAP2; the interaction enhances MAP2 phosphorylation and localizes KNDC1 to dendrites. As to expression, expressed specifically in the cerebral cortex.

It is found in the cell projection. The protein resides in the dendrite. The protein localises to the perikaryon. In terms of biological role, RAS-Guanine nucleotide exchange factor (GEF) that controls the negative regulation of neuronal dendrite growth by mediating a signaling pathway linking RAS and MAP2. May be involved in cellular senescence. This chain is Kinase non-catalytic C-lobe domain-containing protein 1, found in Homo sapiens (Human).